The primary structure comprises 116 residues: Large ribosomal subunit protein bL17 (116 aa).

The protein belongs to the bacterial ribosomal protein bL17 family. In terms of assembly, part of the 50S ribosomal subunit. Contacts protein L32.

The sequence is that of Large ribosomal subunit protein bL17 from Cyanothece sp. (strain PCC 7425 / ATCC 29141).